Reading from the N-terminus, the 265-residue chain is Glutamate racemase (265 aa).

Residues D9–S10 and Y41–S42 each bind substrate. C73 acts as the Proton donor/acceptor in catalysis. Residue N74–T75 participates in substrate binding. C184 serves as the catalytic Proton donor/acceptor. T185 to H186 provides a ligand contact to substrate.

It belongs to the aspartate/glutamate racemases family.

It carries out the reaction L-glutamate = D-glutamate. It functions in the pathway cell wall biogenesis; peptidoglycan biosynthesis. Provides the (R)-glutamate required for cell wall biosynthesis. This chain is Glutamate racemase, found in Actinobacillus pleuropneumoniae serotype 3 (strain JL03).